A 950-amino-acid polypeptide reads, in one-letter code: Protein translocase subunit SecA (950 aa).

ATP contacts are provided by residues Q87, G105–T109, and D524. The interval G908–E932 is disordered. Zn(2+) contacts are provided by C934, C936, C945, and H946.

It belongs to the SecA family. As to quaternary structure, monomer and homodimer. Part of the essential Sec protein translocation apparatus which comprises SecA, SecYEG and auxiliary proteins SecDF-YajC and YidC. Zn(2+) serves as cofactor.

It localises to the cell inner membrane. The protein resides in the cytoplasm. The enzyme catalyses ATP + H2O + cellular proteinSide 1 = ADP + phosphate + cellular proteinSide 2.. Part of the Sec protein translocase complex. Interacts with the SecYEG preprotein conducting channel. Has a central role in coupling the hydrolysis of ATP to the transfer of proteins into and across the cell membrane, serving both as a receptor for the preprotein-SecB complex and as an ATP-driven molecular motor driving the stepwise translocation of polypeptide chains across the membrane. This chain is Protein translocase subunit SecA, found in Bradyrhizobium sp. (strain BTAi1 / ATCC BAA-1182).